The following is an 87-amino-acid chain: Omega-lycotoxin-Am1c (87 aa).

Residues 1–17 (MKLSIFFVLFFIAIAYC) form the signal peptide. Positions 18–40 (QPEFLDDEEDEVEETLPVAEEGR) are excised as a propeptide. Disulfide bonds link Cys-44/Cys-59, Cys-51/Cys-64, Cys-58/Cys-84, and Cys-66/Cys-82.

It belongs to the neurotoxin omega-lctx family. As to expression, expressed by the venom gland.

It localises to the secreted. Modulates Cav2.1/CACNA1A voltage-gated calcium channels (P/Q-type currents) in rat cerebellar Purkinje cells and hippocampal CA1-CA3 neurons. At saturating concentrations (&gt;10 nM) decelerates activation kinetics and slightly increases peak amplitude without affecting deactivation kinetics. In vivo, does not cause death when intravenously injected into mice. In rat models, through its activity on Cav2.1/CACNA1A, has an ameliorative effect on memory defects provoked by hyperstimulation of N-methyl-D-aspartate receptors (NMDARs) in the hippocampus. In Alopecosa marikovskyi (Wolf spider), this protein is Omega-lycotoxin-Am1c.